Here is an 882-residue protein sequence, read N- to C-terminus: Alanine--tRNA ligase (882 aa).

Residues His-571, His-575, Cys-673, and His-677 each coordinate Zn(2+).

This sequence belongs to the class-II aminoacyl-tRNA synthetase family. Zn(2+) serves as cofactor.

It localises to the cytoplasm. It carries out the reaction tRNA(Ala) + L-alanine + ATP = L-alanyl-tRNA(Ala) + AMP + diphosphate. In terms of biological role, catalyzes the attachment of alanine to tRNA(Ala) in a two-step reaction: alanine is first activated by ATP to form Ala-AMP and then transferred to the acceptor end of tRNA(Ala). Also edits incorrectly charged Ser-tRNA(Ala) and Gly-tRNA(Ala) via its editing domain. This Stenotrophomonas maltophilia (strain K279a) protein is Alanine--tRNA ligase.